The primary structure comprises 1489 residues: Chromatin-remodeling ATPase INO80 (1489 aa).

Phosphoserine occurs at positions 65, 115, and 133. 2 disordered regions span residues 137-311 and 393-452; these read NEKD…KLSM and KRER…GLPT. Acidic residues-rich tracts occupy residues 140 to 164 and 214 to 291; these read DADEDEEDDEDELEDGEEDMEEDEA and DENE…DFNP. A compositionally biased stretch (low complexity) spans 301 to 311; sequence SSSSSSTKLSM. Residues 393 to 402 are compositionally biased toward basic and acidic residues; sequence KREREREEAL. The DBINO domain maps to 476 to 601; sequence IWKDMARKDS…SHFIGRKIKT (126 aa). Ser-610 bears the Phosphoserine mark. Positions 718–890 constitute a Helicase ATP-binding domain; sequence ANLYDQGING…WALLHFIMPS (173 aa). 731-738 lines the ATP pocket; the sequence is DEMGLGKT. The DEAQ box signature appears at 841 to 844; that stretch reads DEAQ. In terms of domain architecture, Helicase C-terminal spans 1303–1467; it reads KLDELLVKLK…TIEVGENDSE (165 aa). A disordered region spans residues 1456-1489; it reads IKTIEVGENDSEVTREGSKSISQDGIKEAASALA.

Belongs to the SNF2/RAD54 helicase family. Component of the chromatin-remodeling INO80 complex, at least composed of ARP4, ARP5, ARP8, RVB1, RVB2, TAF14, NHP10, IES1, IES3, IES4, IES6, ACT1, IES2, IES5 and INO80.

It is found in the nucleus. The catalysed reaction is ATP + H2O = ADP + phosphate + H(+). In terms of biological role, ATPase component of the INO80 complex which remodels chromatin by shifting nucleosomes and is involved in DNA repair. Its ability to induce transcription of some phosphate-responsive genes is modulated by inositol polyphosphates. The INO80 complex is involved in DNA repair by associating with 'Ser-129' phosphorylated H2A histones as a response to DNA damage. The sequence is that of Chromatin-remodeling ATPase INO80 (INO80) from Saccharomyces cerevisiae (strain ATCC 204508 / S288c) (Baker's yeast).